The sequence spans 92 residues: C-C motif chemokine 5 (92 aa).

The signal sequence occupies residues 1-23; the sequence is MKVSTAAFAVLLTAAAFCTPASA. Cystine bridges form between C33/C57 and C34/C73.

Belongs to the intercrine beta (chemokine CC) family.

It localises to the secreted. Its function is as follows. Chemoattractant for blood monocytes, memory T-helper cells and eosinophils. Causes the release of histamine from basophils and activates eosinophils. May activate several chemokine receptors including CCR1, CCR3, CCR4 and CCR5. May also be an agonist of the G protein-coupled receptor GPR75. Together with GPR75, may play a role in neuron survival through activation of a downstream signaling pathway involving the PI3, Akt and MAP kinases. By activating GPR75 may also play a role in insulin secretion by islet cells. The sequence is that of C-C motif chemokine 5 (CCL5) from Felis catus (Cat).